Reading from the N-terminus, the 540-residue chain is Probable feruloyl esterase B-1 (540 aa).

The N-terminal stretch at 1 to 18 (MLVMQLLLPFLASTAAAA) is a signal peptide. 6 N-linked (GlcNAc...) asparagine glycosylation sites follow: Asn28, Asn49, Asn66, Asn95, Asn113, and Asn195. Disulfide bonds link Cys41-Cys90 and Cys76-Cys129. Disulfide bonds link Cys202-Cys458, Cys271-Cys288, and Cys297-Cys308. The active-site Acyl-ester intermediate is Ser203. Residue Asn234 is glycosylated (N-linked (GlcNAc...) asparagine). Ca(2+) is bound by residues Asp272, Asp275, Ala277, Asp279, and Ile281. Asn298, Asn328, and Asn367 each carry an N-linked (GlcNAc...) asparagine glycan. Active-site charge relay system residues include Asp417 and His457. A glycan (N-linked (GlcNAc...) asparagine) is linked at Asn506. Residues Cys517 and Cys539 are joined by a disulfide bond.

It belongs to the tannase family. In terms of assembly, homodimer.

It is found in the secreted. It catalyses the reaction feruloyl-polysaccharide + H2O = ferulate + polysaccharide.. Its function is as follows. Involved in degradation of plant cell walls. Hydrolyzes the feruloyl-arabinose ester bond in arabinoxylans as well as the feruloyl-galactose and feruloyl-arabinose ester bonds in pectin. In Aspergillus oryzae (strain ATCC 42149 / RIB 40) (Yellow koji mold), this protein is Probable feruloyl esterase B-1 (faeB-1).